The primary structure comprises 351 residues: MSDQPKMIYLPETMANWPWPRYINPHYEEVKAESDAWFKGFKPFTKQSQVAFDKCDFGRLASLAYPWASKEHLRTGCDLMNVFFMIDEYTDVECASVVRGMVDIVIDVINNPHKPRPEGESLLGEITRQFWERAIKAATPSSQKHFIEAFTDYLNSVVEQAADRDNNHIRTVDSYLKTRRENIGARPSYFPAELGLNLPDEAFYHPVVTELSYNIAELIILDNDIASYNKEQATGDDRHNILTIVMLQFNIDLEAAMTWVASYHKDVENKFLDGMKKLPSFGPVVDKELEEYILALAIWPRTNDCWNFESGRYFGSKGLQVQKTRYVPLLPKVKTDPTLKQKQVVVSLVDL.

4 residues coordinate Mg(2+): D87, N223, S227, and E231. A DDXXD motif motif is present at residues 87-91 (DEYTD). Positions 223–231 (NDIASYNKE) match the NSE/DTE motif motif. (2E,6E)-farnesyl diphosphate-binding residues include R312 and Y313.

Belongs to the terpene synthase family. It depends on Mg(2+) as a cofactor.

The catalysed reaction is (2E,6E)-farnesyl diphosphate = pentalenene + diphosphate. Functionally, terpene cyclase that catalyzes the cyclization of farnesyl diphosphate (FPP) to pentalenene as a major product, as well as caryophyllene. In Postia placenta (strain ATCC 44394 / Madison 698-R) (Brown rot fungus), this protein is Sesquiterpene synthase 14.